Consider the following 232-residue polypeptide: Ribonuclease 3 (232 aa).

Positions Ala10–Gly135 constitute an RNase III domain. Glu48 contacts Mg(2+). Asp52 is a catalytic residue. Positions 121 and 124 each coordinate Mg(2+). The active site involves Glu124. The region spanning Asp161–Glu230 is the DRBM domain.

The protein belongs to the ribonuclease III family. Homodimer. Requires Mg(2+) as cofactor.

The protein localises to the cytoplasm. It carries out the reaction Endonucleolytic cleavage to 5'-phosphomonoester.. Digests double-stranded RNA. Involved in the processing of primary rRNA transcript to yield the immediate precursors to the large and small rRNAs (23S and 16S). Processes some mRNAs, and tRNAs when they are encoded in the rRNA operon. Processes pre-crRNA and tracrRNA of type II CRISPR loci if present in the organism. The chain is Ribonuclease 3 from Anaplasma marginale (strain St. Maries).